We begin with the raw amino-acid sequence, 340 residues long: Entry-fusion complex protein OPG094 (340 aa).

The tract at residues 1 to 20 (MGGGVSVELPKRDPPPGVPT) is disordered. G2 is lipidated: N-myristoyl glycine; by host. Over 2-319 (GGGVSVELPK…VQHNIKHSFD (318 aa)) the chain is Virion surface. Residues 320 to 340 (LKLHLISLLSLLVIWILIVAI) traverse the membrane as a helical; Signal-anchor for type II membrane protein segment.

Belongs to the orthopoxvirus OPG086 family. Interacts with OPG143. Component of the entry fusion complex (EFC) composed of OPG053, OPG076, OPG086, OPG094, OPG095, OPG099, OPG107, OPG143, OPG104, OPG147 and OPG155. Except for OPG095 and OPG053, each of the EFC proteins is required for assembly or stability of the complex. Post-translationally, unglycosylated because produced in viral factories instead of the classic ER -Golgi route.

Its subcellular location is the virion membrane. In terms of biological role, component of the entry fusion complex (EFC), which consists of 11 proteins. During cell infection, this complex mediates entry of the virion core into the host cytoplasm by a two-step mechanism consisting of lipid mixing of the viral and cellular membranes and subsequent pore formation. This chain is Entry-fusion complex protein OPG094 (OPG094), found in Variola virus.